The chain runs to 268 residues: Small ribosomal subunit protein uS3 (268 aa).

In terms of domain architecture, KH type-2 spans 38–106; it reads IRKLLATGME…QVQLNILEVK (69 aa). Positions 217–268 are disordered; sequence NTAAPAGDRPRRERPSRPRRSGATGTTATSTEAGRAATATADAPATEQNQEG. Low complexity predominate over residues 237-268; sequence SGATGTTATSTEAGRAATATADAPATEQNQEG.

It belongs to the universal ribosomal protein uS3 family. As to quaternary structure, part of the 30S ribosomal subunit. Forms a tight complex with proteins S10 and S14.

In terms of biological role, binds the lower part of the 30S subunit head. Binds mRNA in the 70S ribosome, positioning it for translation. This chain is Small ribosomal subunit protein uS3, found in Rhodococcus erythropolis (strain PR4 / NBRC 100887).